An 89-amino-acid chain; its full sequence is Small ribosomal subunit protein uS15 (89 aa).

This sequence belongs to the universal ribosomal protein uS15 family. Part of the 30S ribosomal subunit. Forms a bridge to the 50S subunit in the 70S ribosome, contacting the 23S rRNA.

In terms of biological role, one of the primary rRNA binding proteins, it binds directly to 16S rRNA where it helps nucleate assembly of the platform of the 30S subunit by binding and bridging several RNA helices of the 16S rRNA. Functionally, forms an intersubunit bridge (bridge B4) with the 23S rRNA of the 50S subunit in the ribosome. The polypeptide is Small ribosomal subunit protein uS15 (Paramagnetospirillum magneticum (strain ATCC 700264 / AMB-1) (Magnetospirillum magneticum)).